We begin with the raw amino-acid sequence, 278 residues long: Pantothenate synthetase (278 aa).

31–38 (MGALHEGH) contributes to the ATP binding site. The active-site Proton donor is the His-38. Gln-62 is a (R)-pantoate binding site. Position 62 (Gln-62) interacts with beta-alanine. Residue 148-151 (GEKD) participates in ATP binding. Gln-154 contacts (R)-pantoate. ATP is bound by residues Leu-177 and 185 to 188 (MSSR).

It belongs to the pantothenate synthetase family. Homodimer.

It is found in the cytoplasm. It catalyses the reaction (R)-pantoate + beta-alanine + ATP = (R)-pantothenate + AMP + diphosphate + H(+). The protein operates within cofactor biosynthesis; (R)-pantothenate biosynthesis; (R)-pantothenate from (R)-pantoate and beta-alanine: step 1/1. Its function is as follows. Catalyzes the condensation of pantoate with beta-alanine in an ATP-dependent reaction via a pantoyl-adenylate intermediate. The protein is Pantothenate synthetase of Acidiphilium cryptum (strain JF-5).